Reading from the N-terminus, the 217-residue chain is 3-demethoxyubiquinol 3-hydroxylase (217 aa).

Residues E66, E96, H99, E148, E180, and H183 each contribute to the Fe cation site.

The protein belongs to the COQ7 family. Fe cation serves as cofactor.

The protein resides in the cell membrane. It catalyses the reaction a 5-methoxy-2-methyl-3-(all-trans-polyprenyl)benzene-1,4-diol + AH2 + O2 = a 3-demethylubiquinol + A + H2O. It functions in the pathway cofactor biosynthesis; ubiquinone biosynthesis. In terms of biological role, catalyzes the hydroxylation of 2-nonaprenyl-3-methyl-6-methoxy-1,4-benzoquinol during ubiquinone biosynthesis. This Xanthomonas euvesicatoria pv. vesicatoria (strain 85-10) (Xanthomonas campestris pv. vesicatoria) protein is 3-demethoxyubiquinol 3-hydroxylase.